The sequence spans 206 residues: Translocation protein SEC66 (206 aa).

Residues 1–27 are Lumenal-facing; sequence MSEFNETKFSNNGTFFETEEPIVETKS. Asn5 and Asn12 each carry an N-linked (GlcNAc...) asparagine glycan. The helical; Signal-anchor for type II membrane protein transmembrane segment at 28-48 threads the bilayer; sequence ISVYTPLIYVFILVVSLVMFA. Over 49–206 the chain is Cytoplasmic; it reads SSYRKKQAKK…KINNDGRLVN (158 aa).

To S.pombe SpBC409.21. Component of the heterotetrameric Sec62/63complex composed of SEC62, SEC63, SEC66 and SEC72. The Sec62/63 complex associates with the Sec61 complex to form the Sec complex. Part of a complex consisting of KAR2, SEC63, SEC66 and SEC72.

It is found in the endoplasmic reticulum membrane. Its function is as follows. Acts as a component of the Sec62/63 complex which is involved in SRP-independent post-translational translocation across the endoplasmic reticulum (ER) and functions together with the Sec61 complex and KAR2 in a channel-forming translocon complex. A cycle of assembly and disassembly of Sec62/63 complex from SEC61 may govern the activity of the translocon. SEC66 is required to attach or retain SEC72 in the SEC63 complex. It is essential for growth at elevated temperatures. The sequence is that of Translocation protein SEC66 (SEC66) from Saccharomyces cerevisiae (strain ATCC 204508 / S288c) (Baker's yeast).